We begin with the raw amino-acid sequence, 291 residues long: ATP synthase gamma chain (291 aa).

Belongs to the ATPase gamma chain family. As to quaternary structure, F-type ATPases have 2 components, CF(1) - the catalytic core - and CF(0) - the membrane proton channel. CF(1) has five subunits: alpha(3), beta(3), gamma(1), delta(1), epsilon(1). CF(0) has three main subunits: a, b and c.

The protein resides in the cell inner membrane. Functionally, produces ATP from ADP in the presence of a proton gradient across the membrane. The gamma chain is believed to be important in regulating ATPase activity and the flow of protons through the CF(0) complex. In Burkholderia cenocepacia (strain ATCC BAA-245 / DSM 16553 / LMG 16656 / NCTC 13227 / J2315 / CF5610) (Burkholderia cepacia (strain J2315)), this protein is ATP synthase gamma chain.